We begin with the raw amino-acid sequence, 204 residues long: WW domain-containing protein C11B10.08 (204 aa).

The WW domain maps to 7–43; sequence EGLPNGWVAQWDERYKCYFYVNESDPKAKPQWECPVR. A disordered region spans residues 32–117; the sequence is PKAKPQWECP…GYPQQPYYYP (86 aa). Low complexity-rich tracts occupy residues 66 to 100 and 108 to 117; these read YSNS…GAAP and GYPQQPYYYP.

The protein localises to the cytoplasm. It is found in the nucleus. This Schizosaccharomyces pombe (strain 972 / ATCC 24843) (Fission yeast) protein is WW domain-containing protein C11B10.08.